Here is a 392-residue protein sequence, read N- to C-terminus: L-lactate dehydrogenase (392 aa).

One can recognise an FMN hydroxy acid dehydrogenase domain in the interval 1 to 380 (MIISASTDYR…GSDSLVTGSA (380 aa)). Substrate is bound at residue Tyr24. Residues Ser106 and Gln127 each contribute to the FMN site. Tyr129 provides a ligand contact to substrate. Thr155 serves as a coordination point for FMN. A substrate-binding site is contributed by Arg164. Position 251 (Lys251) interacts with FMN. The Proton acceptor role is filled by His275. A substrate-binding site is contributed by Arg278. 306 to 330 (DSGVRNGLDVVRMIAMGADTILLGR) lines the FMN pocket.

The protein belongs to the FMN-dependent alpha-hydroxy acid dehydrogenase family. The cofactor is FMN.

Its subcellular location is the cell inner membrane. It carries out the reaction (S)-lactate + A = pyruvate + AH2. Its function is as follows. Catalyzes the conversion of L-lactate to pyruvate. Is coupled to the respiratory chain. The protein is L-lactate dehydrogenase of Chromohalobacter salexigens (strain ATCC BAA-138 / DSM 3043 / CIP 106854 / NCIMB 13768 / 1H11).